A 1019-amino-acid chain; its full sequence is Katanin p80 WD40 repeat-containing subunit B1 homolog KTN80.1 (1019 aa).

7 WD repeats span residues 13 to 53, 56 to 95, 98 to 137, 140 to 181, 183 to 221, 224 to 264, and 266 to 303; these read AHSG…SPMS, GHTS…MVRA, GHRS…CIQT, GHTR…HEFK, HEGP…LIGT, PEAT…DGVD, and GWST…LEPY. Residues 114–130 carry the DWD box motif; that stretch reads FLASGSSDTNLRVWDTR. Disordered regions lie at residues 388 to 424, 455 to 474, 517 to 581, and 607 to 652; these read FGPA…TKSG, KSGL…LSEQ, IHRS…GSRE, and RGEK…RARS. The span at 465 to 474 shows a compositional bias: polar residues; it reads QTQNAFLSEQ. Residues 553-572 are compositionally biased toward basic and acidic residues; that stretch reads IPSKTERVLSREKPGDEQKN. Residues 614–628 show a composition bias toward polar residues; sequence TEGASTTIEQNNNAV.

The protein belongs to the WD repeat KATNB1 family. In terms of assembly, component of KTN80-KTN1 complexes composed of a hexamer of KTN1-KTN80 heterodimers that sense microtubule (MT) geometry to confer precise MT severing. Interacts directly with AAA1/KTN1 and KTN80.3, and weakly with KTN80.4. As to expression, expressed at low levels in siliques, flowers, leaves, stems and roots.

The protein localises to the cytoplasm. It localises to the cytoskeleton. In terms of biological role, may participate in a complex which severs microtubules in an ATP-dependent manner. Microtubule severing may promote rapid reorganization of cellular microtubule arrays. Confers precision to microtubule (MT) severing by specific targeting of KTN1 to MT cleavage sites such as crossover or branching nucleation sites. Together with other KTN80s, regulates cell elongation by modulating MT organization. The polypeptide is Katanin p80 WD40 repeat-containing subunit B1 homolog KTN80.1 (Arabidopsis thaliana (Mouse-ear cress)).